Here is a 377-residue protein sequence, read N- to C-terminus: Succinyl-diaminopimelate desuccinylase (377 aa).

Residue His68 participates in Zn(2+) binding. Residue Asp70 is part of the active site. Asp101 is a binding site for Zn(2+). The active-site Proton acceptor is the Glu135. Zn(2+) contacts are provided by Glu136, Glu164, and His350.

Belongs to the peptidase M20A family. DapE subfamily. As to quaternary structure, homodimer. Zn(2+) is required as a cofactor. The cofactor is Co(2+).

It catalyses the reaction N-succinyl-(2S,6S)-2,6-diaminopimelate + H2O = (2S,6S)-2,6-diaminopimelate + succinate. The protein operates within amino-acid biosynthesis; L-lysine biosynthesis via DAP pathway; LL-2,6-diaminopimelate from (S)-tetrahydrodipicolinate (succinylase route): step 3/3. Its function is as follows. Catalyzes the hydrolysis of N-succinyl-L,L-diaminopimelic acid (SDAP), forming succinate and LL-2,6-diaminopimelate (DAP), an intermediate involved in the bacterial biosynthesis of lysine and meso-diaminopimelic acid, an essential component of bacterial cell walls. In Acinetobacter baylyi (strain ATCC 33305 / BD413 / ADP1), this protein is Succinyl-diaminopimelate desuccinylase.